The following is a 96-amino-acid chain: MEQAPEDQGPQREPYNDWTLELLEELKNEAVRHFPRIWLHSLGQHIYETYGDTWTGVEALIRILQQLLFIHFRIGCRHSRIGIIQQRRTRNGASKS.

A homooligomerization region spans residues methionine 1–leucine 42. Phosphoserine; by host occurs at positions 79, 94, and 96.

It belongs to the HIV-1 VPR protein family. Homooligomer, may form homodimer. Interacts with p6-gag region of the Pr55 Gag precursor protein through a (Leu-X-X)4 motif near the C-terminus of the P6gag protein. Interacts with host UNG. May interact with host RAD23A/HHR23A. Interacts with host VPRBP/DCAF1, leading to hijack the CUL4A-RBX1-DDB1-DCAF1/VPRBP complex, mediating ubiquitination of host proteins such as TERT and ZGPAT and arrest of the cell cycle in G2 phase. In terms of processing, phosphorylated on several residues by host. These phosphorylations regulate VPR activity for the nuclear import of the HIV-1 pre-integration complex.

It localises to the virion. Its subcellular location is the host nucleus. It is found in the host extracellular space. Functionally, during virus replication, may deplete host UNG protein, and incude G2-M cell cycle arrest. Acts by targeting specific host proteins for degradation by the 26S proteasome, through association with the cellular CUL4A-DDB1 E3 ligase complex by direct interaction with host VPRPB/DCAF-1. Cell cycle arrest reportedly occurs within hours of infection and is not blocked by antiviral agents, suggesting that it is initiated by the VPR carried into the virion. Additionally, VPR induces apoptosis in a cell cycle dependent manner suggesting that these two effects are mechanistically linked. Detected in the serum and cerebrospinal fluid of AIDS patient, VPR may also induce cell death to bystander cells. During virus entry, plays a role in the transport of the viral pre-integration (PIC) complex to the host nucleus. This function is crucial for viral infection of non-dividing macrophages. May act directly at the nuclear pore complex, by binding nucleoporins phenylalanine-glycine (FG)-repeat regions. The chain is Protein Vpr from Human immunodeficiency virus type 1 group M subtype B (strain 89.6) (HIV-1).